A 591-amino-acid polypeptide reads, in one-letter code: MDDLDALLADLESTTSHISKRPVFLSEEPPYSYPTGNHTYQEIAVPPPVPPPPSSEALNGTVLDPLDQWQPSGSRYAHQQPPSPLPVYSSSAKNSSASNTQDGVGSLCSRAGEEEHVYSFPNKQKSAEPSPTVMSSSLGSNLSELDRLLLELNAVQHSPPGFPADEAESSPPLPGALSPLYGIPENNTPLGGKAGPLVKEKPKRNGGRGLEDVRPSVESLLDELESSVPSPVPAITVNQGEMSSPQRVTSSQQQTRISASSATRELDELMASLSDFKMQGLEQRVDGERPWAAGWPPSSRQSSPEGQDEGGFMAQGKTGSSSPPGGLSKPGSQLDSMLGSLQSDLNKLGVATVAKGVCGACKKPIAGQVVTAMGKTWHPEHFVCTHCQEEIGSRNFFERDGQPYCEKDYHSLFSPRCYYCNGPILDKVVTALDRTWHPEHFFCAQCGAFFGPEGFHEKDGKAYCRKDYFDMFAPKCGGCARAILENYISALNTLWHPECFVCRECFTPFVNGSFFEHDGQPYCEVHYHERRGSLCSGCQKPITGRCITAMAKKFHPEHFVCAFCLKQLNKGTFKEQNDKPYCQSCFVKLFC.

N-acetylmethionine is present on Met1. The LD motif 1 signature appears at 3–15; it reads DLDALLADLESTT. The disordered stretch occupies residues 17–139; it reads HISKRPVFLS…SPTVMSSSLG (123 aa). Phosphotyrosine; by PTK6 is present on Tyr31. The span at 45–54 shows a compositional bias: pro residues; sequence VPPPVPPPPS. Ser83 carries the phosphoserine modification. Tyr88 is modified (phosphotyrosine). Residues 89–99 show a composition bias toward low complexity; it reads SSSAKNSSASN. The residue at position 106 (Ser106) is a Phosphoserine. Position 118 is a phosphotyrosine; by PTK6 (Tyr118). Ser119, Ser126, and Ser130 each carry phosphoserine. Over residues 121 to 137 the composition is skewed to polar residues; that stretch reads PNKQKSAEPSPTVMSSS. Thr132 is subject to Phosphothreonine. A phosphoserine mark is found at Ser137, Ser140, and Ser143. The LD motif 2 signature appears at 144–156; sequence ELDRLLLELNAVQ. Residues 156–261 form a disordered region; it reads QHSPPGFPAD…QQQTRISASS (106 aa). Phosphotyrosine is present on Tyr181. The LD motif 3 motif lies at 216–228; it reads SVESLLDELESSV. A Phosphoserine modification is found at Ser230. Residues 236–261 are compositionally biased toward polar residues; the sequence is TVNQGEMSSPQRVTSSQQQTRISASS. At Ser244 the chain carries Phosphoserine; by CDK5. Phosphoserine is present on residues Ser250, Ser258, Ser261, Ser272, Ser303, Ser322, Ser332, and Ser340. The segment at 262 to 315 is required for binding to PARVA and ILK; sequence ATRELDELMASLSDFKMQGLEQRVDGERPWAAGWPPSSRQSSPEGQDEGGFMAQ. The LD motif 4 motif lies at 265 to 276; it reads ELDELMASLSDF. The disordered stretch occupies residues 289–338; sequence RPWAAGWPPSSRQSSPEGQDEGGFMAQGKTGSSSPPGGLSKPGSQLDSML. Positions 315-334 are enriched in low complexity; the sequence is QGKTGSSSPPGGLSKPGSQL. The LD motif 5 signature appears at 333–345; the sequence is QLDSMLGSLQSDL. LIM zinc-binding domains follow at residues 356–415, 416–473, 474–533, and 534–591; these read GVCG…LFSP, RCYY…DMFA, PKCG…RRGS, and LCSG…KLFC. Ser533 carries the post-translational modification Phosphoserine.

Belongs to the paxillin family. As to quaternary structure, interacts in vitro with VCL/vinculin as well as to the SH3 domain of SRC and, when tyrosine phosphorylated, to the SH2 domain of CRK. Interacts with GIT1. Interacts with NUDT16L1/SDOS. Interacts with PTK2/FAK1. Interacts with PTK2B/PYK2. Interacts with ASAP2. Interacts with unphosphorylated ITGA4. Interacts with RNF5. Interacts with PDCD10. Interacts with NEK3, the interaction is prolactin-dependent. Interacts with PTK6. Interacts with TGFB1I1. Interacts with SORBS1. Interacts with PARVB. Interacts (via LD motif 4) with PARVA/PARVIN. Interacts (via LD motif 4) with ILK. Interacts (via cytoplasmic domain) with CEACAM1; the interaction is phosphotyrosyl-dependent. Interacts with LIMA1; this complex stabilizes actin dynamics. Interacts with CD36 (via C-terminus). Interacts with TRIM15. Interacts with PAK4; PAK4 acts as a scaffold to suppport PAXI phosphorylation at Ser-272. Post-translationally, phosphorylated by MAPK1/ERK2. Phosphorylated on tyrosine residues during integrin-mediated cell adhesion, embryonic development, fibroblast transformation and following stimulation of cells by mitogens. Phosphorylation at Ser-244 by CDK5 reduces its interaction with PTK2/FAK1 in matrix-cell focal adhesions (MCFA) during oligodendrocytes (OLs) differentiation. Phosphorylation at Tyr-31 and Tyr-118 by PTK6 promote the activation of RAC1 via CRK/CrKII, thereby promoting migration and invasion. Phosphorylation at Ser-250 by SLK is required for PXN redistribution and cell motility. Phosphorylation at Ser-272 promotes focal adhesion disassembly during cell migration.

It localises to the cytoplasm. The protein resides in the cytoskeleton. The protein localises to the cell junction. It is found in the focal adhesion. Its subcellular location is the cell cortex. In terms of biological role, cytoskeletal protein involved in actin-membrane attachment at sites of cell adhesion to the extracellular matrix (focal adhesion). Recruits other proteins such as TRIM15 to focal adhesion. The protein is Paxillin of Mus musculus (Mouse).